Here is a 287-residue protein sequence, read N- to C-terminus: Large ribosomal subunit protein uL2 (287 aa).

The tract at residues 221–287 is disordered; sequence RGSVMNPCDH…SKRSRGGRDS (67 aa). Basic residues predominate over residues 258 to 287; sequence KTRKRNKPSNRYVLRKRRKTSKRSRGGRDS.

It belongs to the universal ribosomal protein uL2 family. Part of the 50S ribosomal subunit. Forms a bridge to the 30S subunit in the 70S ribosome.

Functionally, one of the primary rRNA binding proteins. Required for association of the 30S and 50S subunits to form the 70S ribosome, for tRNA binding and peptide bond formation. It has been suggested to have peptidyltransferase activity; this is somewhat controversial. Makes several contacts with the 16S rRNA in the 70S ribosome. The sequence is that of Large ribosomal subunit protein uL2 from Parasynechococcus marenigrum (strain WH8102).